Consider the following 1365-residue polypeptide: Homeotic protein spalt-major (1365 aa).

Disordered stretches follow at residues 47-194 (SADK…EVTL), 270-298 (QAKQ…EEEE), and 322-363 (LINA…NTHK). 2 stretches are compositionally biased toward low complexity: residues 63–76 (SPLT…SPSR) and 87–99 (EQST…PEQS). Over residues 103–117 (HQLENDIKSEAKSEI) the composition is skewed to basic and acidic residues. A compositionally biased stretch (low complexity) spans 146 to 157 (PSSPVAEASAEE). The segment covering 159–181 (ATERTPEKEKEKDVEVDVEKPDE) has biased composition (basic and acidic residues). Positions 275-298 (EDTEEDADQEQDQEQETDTYEEEE) are enriched in acidic residues. Basic and acidic residues predominate over residues 346–363 (HDHESQPNRRPSLDNTHK). 2 C2H2-type zinc fingers span residues 451 to 473 (HRCR…IRSH) and 479 to 501 (FKCN…FQRH). Disordered stretches follow at residues 508 to 554 (VPMN…ASFP) and 586 to 716 (ELPT…TPGQ). Polar residues predominate over residues 530–539 (MSPTDSSPNH). Over residues 540–554 (SPAPPPLGSAPASFP) the composition is skewed to pro residues. Composition is skewed to basic and acidic residues over residues 603–622 (PQVK…HEQE) and 638–662 (VRIK…EPRR). Residues Ser739 and Ser744 each carry the phosphoserine modification. Residues 740 to 772 (PEHHSPVRSPAGGALPPGVPPPPHHHPHHMARS) form a disordered region. 3 C2H2-type zinc fingers span residues 824-846 (NQCV…YRTH), 852-874 (FKCR…MAVH), and 884-906 (HQCP…IRLH). 3 disordered regions span residues 948 to 1012 (ALPG…RSGD), 1030 to 1129 (VVNT…ILTS), and 1146 to 1241 (HHLQ…GARP). Positions 976 to 991 (DMDDNMDCGEDYDDDV) are enriched in acidic residues. The span at 1040 to 1054 (SSASSHGHSVGSTSA) shows a compositional bias: low complexity. Polar residues predominate over residues 1055 to 1079 (PTSPSVHASSQVIKRSSSPARSEAS). Phosphoserine occurs at positions 1076 and 1079. 3 stretches are compositionally biased toward low complexity: residues 1085 to 1100 (LTPR…SRSP), 1114 to 1123 (RSPSGSSHAS), and 1146 to 1168 (HHLQ…AAAA). The span at 1181 to 1191 (QHQEQLRREAA) shows a compositional bias: basic and acidic residues. Low complexity predominate over residues 1192-1218 (EAQQKAAAAAAAAAAAAAAQRQTPPQA). C2H2-type zinc fingers lie at residues 1289–1311 (TTCG…YRSH) and 1317–1339 (FKCS…MLTH).

The protein belongs to the sal C2H2-type zinc-finger protein family.

The protein resides in the nucleus. In terms of biological role, required for the establishment of the posterior-most head and the anterior-most tail segments of the embryo. Probably function as a transcriptional regulator. Could repress the transcription of the tsh gene. This is Homeotic protein spalt-major (salm) from Drosophila melanogaster (Fruit fly).